A 235-amino-acid chain; its full sequence is uncharacterized protein (235 aa).

The next 7 membrane-spanning stretches (helical) occupy residues 2-22 (VIGP…GALL), 34-54 (MTSI…VKCA), 56-76 (LPAM…CLLE), 102-122 (FIQN…GIFG), 147-167 (MIFA…LLII), 178-198 (ILPL…GLLL), and 210-230 (MFPV…SAAW).

The protein resides in the cell membrane. This is an uncharacterized protein from Escherichia coli (strain K12).